We begin with the raw amino-acid sequence, 47 residues long: Potamin-1 (47 aa).

Cystine bridges form between Cys-3–Cys-40, Cys-6–Cys-24, and Cys-7–Cys-36.

Inhibitor of serine proteases chymotrypsin, papain and trypsin. Has strong antifungal activity against C.albicans and R.solani. Has antibacterial activity against the Gram-positive bacterium C.michiganense, but lacks antibacterial activity against the Gram-positive bacterium S.aureus. Lacks hemolytic activity against human erythrocytes. In Solanum tuberosum (Potato), this protein is Potamin-1.